Consider the following 661-residue polypeptide: MATTLTPTQRYAAGALLALALRQAQIHQSVLLGAHHHHDDDDEEQGRTSTSSGGGGGSSSSSSNSGAGADADLWTHDSHGLLRPVFRFLEIDPKAWSGLEETAASSEAKHHIGAFLRIIFEEDGESSSDRSVQELALAKGVDVMVMSLGNDSEVGNTIKGGDQDALPSSSGTDKSPGESSHDDQLGINKLTLDDIPANNHRKMALLFALLSACVADKPVSQEEEDRKSTRFRKGYDARHRVALRLLSTWLDVKWIKMEAIEVMVACSAMAAAKEQEQSQESASPKSKWEKWKRGGIIGAAALTGGALLAITGGLAAPAIAAGFGALAPTLGTLVPVIGASGFAAMATAAGSVAGSVAVAASFGAAGAGLTGSKMARRIGSVKEFEFKPIGENHNQGRLAVGILISGFAFDEDDFCRPWEGWQDNLERYILQWESKHIIAVSTAIQDWLTSRLAMELMKQGAMRTVLSGLLAAFAWPATLLAATDFIDSKWSVAIDRSDKAGKMLAEVLLKGLQGNRPVTLIGFSLGARVIFKCLQELALSSDNEGLVERVVLLGAPVSVKGERWEAARKMVAGRFVNVYSTDDWILGVTFRASLLTQGLAGIQAIDVPGVENVDVTELVDGHSSYLSAAQQILEHLELNTYYPVFVPLSAANEETDGTVAQ.

Disordered stretches follow at residues 34–71 and 154–185; these read AHHH…GADA and VGNT…DDQL. The segment covering 59–69 has biased composition (low complexity); it reads SSSSSNSGAGA. Residues 175-184 show a composition bias toward basic and acidic residues; it reads SPGESSHDDQ. 4 consecutive transmembrane segments (helical) span residues 306 to 326, 333 to 353, 355 to 375, and 466 to 486; these read ALLA…FGAL, LVPV…GSVA, SVAV…SKMA, and LSGL…TDFI.

It belongs to the TMCO4 family. As to quaternary structure, interacts with PKS10/PKS2 and 4CLL9/ACOS12.

It is found in the endoplasmic reticulum membrane. Its function is as follows. Involved in anther lipids biosynthesis and is required for tapetum degradation and pollen wall formation. Required for the formation of Ubisch bodies and microspores. Possesses lipase activity in vitro toward two synthetic substrates, p-nitrophenyl acetate (pNPA) and p-nitrophenyl butyrate (pNPB). In Oryza sativa subsp. japonica (Rice), this protein is Transmembrane and coiled-coil domain-containing protein STS1.